Here is a 969-residue protein sequence, read N- to C-terminus: Bifunctional glutamine synthetase adenylyltransferase/adenylyl-removing enzyme (969 aa).

Positions Met1–His456 are adenylyl removase. The segment at Glu466–Lys969 is adenylyl transferase.

The protein belongs to the GlnE family. Requires Mg(2+) as cofactor.

It carries out the reaction [glutamine synthetase]-O(4)-(5'-adenylyl)-L-tyrosine + phosphate = [glutamine synthetase]-L-tyrosine + ADP. The catalysed reaction is [glutamine synthetase]-L-tyrosine + ATP = [glutamine synthetase]-O(4)-(5'-adenylyl)-L-tyrosine + diphosphate. In terms of biological role, involved in the regulation of glutamine synthetase GlnA, a key enzyme in the process to assimilate ammonia. When cellular nitrogen levels are high, the C-terminal adenylyl transferase (AT) inactivates GlnA by covalent transfer of an adenylyl group from ATP to specific tyrosine residue of GlnA, thus reducing its activity. Conversely, when nitrogen levels are low, the N-terminal adenylyl removase (AR) activates GlnA by removing the adenylyl group by phosphorolysis, increasing its activity. The regulatory region of GlnE binds the signal transduction protein PII (GlnB) which indicates the nitrogen status of the cell. The protein is Bifunctional glutamine synthetase adenylyltransferase/adenylyl-removing enzyme of Nitrosococcus oceani (strain ATCC 19707 / BCRC 17464 / JCM 30415 / NCIMB 11848 / C-107).